A 174-amino-acid chain; its full sequence is ATP-dependent protease subunit HslV (174 aa).

Thr-2 is a catalytic residue. Na(+)-binding residues include Ala-157, Cys-160, and Thr-163.

It belongs to the peptidase T1B family. HslV subfamily. A double ring-shaped homohexamer of HslV is capped on each side by a ring-shaped HslU homohexamer. The assembly of the HslU/HslV complex is dependent on binding of ATP.

Its subcellular location is the cytoplasm. It carries out the reaction ATP-dependent cleavage of peptide bonds with broad specificity.. Allosterically activated by HslU binding. In terms of biological role, protease subunit of a proteasome-like degradation complex believed to be a general protein degrading machinery. This chain is ATP-dependent protease subunit HslV, found in Shewanella baltica (strain OS195).